The following is a 213-amino-acid chain: Ripening-related protein 3 (213 aa).

Residues 1-32 (MAGAMTMSRRRLSHALLLVLAILPNLAALAVA) form the signal peptide.

This sequence belongs to the kiwellin family.

Its subcellular location is the secreted. This Oryza sativa subsp. japonica (Rice) protein is Ripening-related protein 3.